The primary structure comprises 179 residues: Endoribonuclease YbeY (179 aa).

His148, His152, and His158 together coordinate Zn(2+).

The protein belongs to the endoribonuclease YbeY family. Zn(2+) serves as cofactor.

The protein resides in the cytoplasm. In terms of biological role, single strand-specific metallo-endoribonuclease involved in late-stage 70S ribosome quality control and in maturation of the 3' terminus of the 16S rRNA. The protein is Endoribonuclease YbeY of Prochlorococcus marinus (strain MIT 9215).